Here is a 205-residue protein sequence, read N- to C-terminus: SREBP regulating gene protein (205 aa).

Residues 1-16 (MALYVSMVWRKILRKR) are Cytoplasmic-facing. The chain crosses the membrane as a helical span at residues 17 to 35 (WVLGVVFGLSLIYFLTSTF). Topologically, residues 36–205 (KQEERTVRDR…GESPPELLPI (170 aa)) are lumenal. N67 carries an N-linked (GlcNAc...) asparagine glycan.

Belongs to the SPRING family.

It localises to the golgi apparatus membrane. Its function is as follows. Positively regulates hepatic SREBP signaling pathway by modulating the proper localization of SCAP (SREBP cleavage-activating protein) to the endoplasmic reticulum, thereby controlling the level of functional SCAP. The polypeptide is SREBP regulating gene protein (Xenopus laevis (African clawed frog)).